A 267-amino-acid chain; its full sequence is Glucosamine-6-phosphate deaminase (267 aa).

Asp-72 (proton acceptor; for enolization step) is an active-site residue. The For ring-opening step role is filled by Asp-141. The active-site Proton acceptor; for ring-opening step is His-143. The active-site For ring-opening step is the Glu-148.

This sequence belongs to the glucosamine/galactosamine-6-phosphate isomerase family. NagB subfamily. Homohexamer.

It catalyses the reaction alpha-D-glucosamine 6-phosphate + H2O = beta-D-fructose 6-phosphate + NH4(+). Its pathway is amino-sugar metabolism; N-acetylneuraminate degradation; D-fructose 6-phosphate from N-acetylneuraminate: step 5/5. Allosterically activated by N-acetylglucosamine 6-phosphate (GlcNAc6P). In terms of biological role, catalyzes the reversible isomerization-deamination of glucosamine 6-phosphate (GlcN6P) to form fructose 6-phosphate (Fru6P) and ammonium ion. The protein is Glucosamine-6-phosphate deaminase of Pasteurella multocida (strain Pm70).